The chain runs to 363 residues: MTPPLLEIRNVTRRFGDFTAVDNVSLTINTGEFFTLLGPSGCGKTTLLRMLAGFDQPDSGEIRLNGQDLAGVEPEKRPVHTVFQSYALFPHMSVAQNIAFPLKMAGVAKSEIDARVEQALKDVRLADKGGRMPTQLSGGQRQRVAIARALVNRPRLLLLDEPLSALDAKLREEMQIELINLQKDVGITFVYVTHDQGEALALSHRIAVMNQGRVEQLDAPETIYSFPRSRFVADFIGQCNLLDATVEAVDGERVRIDLRGLGEVQALKSFDAQPGEACVLTLRPEKIRLAQSVTADSNEVHFRGRVAELLYLGDVTLYIVELENGERLETLLPNATPGRTKFFEVGDAVEAAWRFDAGHLVRA.

The 231-residue stretch at 6-236 folds into the ABC transporter domain; the sequence is LEIRNVTRRF…PRSRFVADFI (231 aa). 38–45 provides a ligand contact to ATP; sequence GPSGCGKT.

Belongs to the ABC transporter superfamily. Spermidine/putrescine importer (TC 3.A.1.11.1) family. The complex is composed of two ATP-binding proteins (PotA), two transmembrane proteins (PotB and PotC) and a solute-binding protein (PotD).

It localises to the cell inner membrane. It catalyses the reaction ATP + H2O + polyamine-[polyamine-binding protein]Side 1 = ADP + phosphate + polyamineSide 2 + [polyamine-binding protein]Side 1.. Its function is as follows. Part of the ABC transporter complex PotABCD involved in spermidine/putrescine import. Responsible for energy coupling to the transport system. This is Spermidine/putrescine import ATP-binding protein PotA from Pseudomonas aeruginosa (strain UCBPP-PA14).